The primary structure comprises 444 residues: Acetyl-CoA--deacetylcephalosporin C acetyltransferase (444 aa).

Positions 1 to 71 are excised as a propeptide; it reads MLPSAQVARL…PQIANRFEAS (71 aa). The 314-residue stretch at 112 to 425 folds into the AB hydrolase-1 domain; it reads VIVCHTLTSS…DTNEGHDFFV (314 aa). Active-site residues include Ser-208 and His-421.

The protein belongs to the AB hydrolase superfamily. MetX family. As to quaternary structure, heterodimer of chain I and chain II.

It carries out the reaction deacetylcephalosporin C + acetyl-CoA = cephalosporin C + CoA. The protein operates within antibiotic biosynthesis; cephalosporin C biosynthesis. Functionally, catalyzes the conversion of deacetylcephalosporin C to cephalosporin C. This Hapsidospora chrysogena (Acremonium chrysogenum) protein is Acetyl-CoA--deacetylcephalosporin C acetyltransferase (CEFG).